Here is a 31-residue protein sequence, read N- to C-terminus: Protamine CIII (31 aa).

Positions 1 to 31 (MPRRRRASRPVRRRRRPRVSRRRRRGGRRRR) are disordered.

As to expression, testis.

The protein resides in the nucleus. Its subcellular location is the chromosome. Its function is as follows. Protamines substitute for histones in the chromatin of sperm during the haploid phase of spermatogenesis. They compact sperm DNA into a highly condensed, stable and inactive complex. This is Protamine CIII from Oncorhynchus mykiss (Rainbow trout).